A 121-amino-acid chain; its full sequence is Small ribosomal subunit protein uS13 (121 aa).

The interval 93–121 (RNLPVRGQRTRTNARTCKGPRKSMNKQFK) is disordered. The segment covering 110-121 (KGPRKSMNKQFK) has biased composition (basic residues).

It belongs to the universal ribosomal protein uS13 family. Part of the 30S ribosomal subunit. Forms a loose heterodimer with protein S19. Forms two bridges to the 50S subunit in the 70S ribosome.

Its function is as follows. Located at the top of the head of the 30S subunit, it contacts several helices of the 16S rRNA. In the 70S ribosome it contacts the 23S rRNA (bridge B1a) and protein L5 of the 50S subunit (bridge B1b), connecting the 2 subunits; these bridges are implicated in subunit movement. Contacts the tRNAs in the A and P-sites. The protein is Small ribosomal subunit protein uS13 of Blochmanniella pennsylvanica (strain BPEN).